The sequence spans 99 residues: Aspartyl/glutamyl-tRNA(Asn/Gln) amidotransferase subunit C (99 aa).

It belongs to the GatC family. Heterotrimer of A, B and C subunits.

It carries out the reaction L-glutamyl-tRNA(Gln) + L-glutamine + ATP + H2O = L-glutaminyl-tRNA(Gln) + L-glutamate + ADP + phosphate + H(+). It catalyses the reaction L-aspartyl-tRNA(Asn) + L-glutamine + ATP + H2O = L-asparaginyl-tRNA(Asn) + L-glutamate + ADP + phosphate + 2 H(+). Functionally, allows the formation of correctly charged Asn-tRNA(Asn) or Gln-tRNA(Gln) through the transamidation of misacylated Asp-tRNA(Asn) or Glu-tRNA(Gln) in organisms which lack either or both of asparaginyl-tRNA or glutaminyl-tRNA synthetases. The reaction takes place in the presence of glutamine and ATP through an activated phospho-Asp-tRNA(Asn) or phospho-Glu-tRNA(Gln). In Delftia acidovorans (strain DSM 14801 / SPH-1), this protein is Aspartyl/glutamyl-tRNA(Asn/Gln) amidotransferase subunit C.